We begin with the raw amino-acid sequence, 399 residues long: Phosphomevalonate dehydratase large subunit (399 aa).

(R)-5-phosphomevalonate contacts are provided by glycine 54, valine 55, serine 56, asparagine 85, and proline 86. Cysteine 125 is a [4Fe-4S] cluster binding site. (R)-5-phosphomevalonate contacts are provided by glutamate 144 and serine 145. Positions 298 and 355 each coordinate [4Fe-4S] cluster. Residue lysine 375 coordinates (R)-5-phosphomevalonate.

Belongs to the AcnX type II large subunit family. Heterodimer composed of a large subunit (PMDh-L) and a small subunit (PMDh-S). The cofactor is [4Fe-4S] cluster.

The enzyme catalyses (R)-5-phosphomevalonate = (2E)-3-methyl-5-phosphooxypent-2-enoate + H2O. It functions in the pathway isoprenoid biosynthesis; isopentenyl diphosphate biosynthesis via mevalonate pathway. Component of a hydro-lyase that catalyzes the dehydration of mevalonate 5-phosphate (MVA5P) to form trans-anhydromevalonate 5-phosphate (tAHMP). Involved in the archaeal mevalonate (MVA) pathway, which provides fundamental precursors for isoprenoid biosynthesis, such as isopentenyl diphosphate (IPP) and dimethylallyl diphosphate (DMAPP). This Methanothermobacter thermautotrophicus (strain ATCC 29096 / DSM 1053 / JCM 10044 / NBRC 100330 / Delta H) (Methanobacterium thermoautotrophicum) protein is Phosphomevalonate dehydratase large subunit.